Consider the following 364-residue polypeptide: Phosphoserine aminotransferase (364 aa).

Arg-42 contributes to the L-glutamate binding site. Residues 76–77 (GR), Trp-102, Thr-156, Asp-175, and Gln-198 contribute to the pyridoxal 5'-phosphate site. N6-(pyridoxal phosphate)lysine is present on Lys-199. 240–241 (NT) is a pyridoxal 5'-phosphate binding site.

It belongs to the class-V pyridoxal-phosphate-dependent aminotransferase family. SerC subfamily. As to quaternary structure, homodimer. It depends on pyridoxal 5'-phosphate as a cofactor.

The protein localises to the cytoplasm. It catalyses the reaction O-phospho-L-serine + 2-oxoglutarate = 3-phosphooxypyruvate + L-glutamate. The catalysed reaction is 4-(phosphooxy)-L-threonine + 2-oxoglutarate = (R)-3-hydroxy-2-oxo-4-phosphooxybutanoate + L-glutamate. Its pathway is amino-acid biosynthesis; L-serine biosynthesis; L-serine from 3-phospho-D-glycerate: step 2/3. It functions in the pathway cofactor biosynthesis; pyridoxine 5'-phosphate biosynthesis; pyridoxine 5'-phosphate from D-erythrose 4-phosphate: step 3/5. Its function is as follows. Catalyzes the reversible conversion of 3-phosphohydroxypyruvate to phosphoserine and of 3-hydroxy-2-oxo-4-phosphonooxybutanoate to phosphohydroxythreonine. This Shewanella woodyi (strain ATCC 51908 / MS32) protein is Phosphoserine aminotransferase.